Consider the following 416-residue polypeptide: Basic salivary proline-rich protein 2 (416 aa).

Positions 1–16 are cleaved as a signal peptide; it reads MLLILLSVALLALSSA. Q17 is modified (pyrrolidone carboxylic acid). Over residues 19–28 the composition is skewed to polar residues; sequence LNEDVSQEES. The disordered stretch occupies residues 19 to 416; sequence LNEDVSQEES…QGGRPSRPPQ (398 aa). Residue S24 is modified to Phosphoserine. A compositionally biased stretch (low complexity) spans 34–47; that stretch reads GNPQGAPPQGGNKP. Composition is skewed to pro residues over residues 48 to 104 and 112 to 165; these read QGPP…PPPQ and RSPP…PPPQ. S52 carries the post-translational modification Phosphoserine. A run of 15 repeats spans residues 53–72, 74–93, 94–113, 114–133, 135–154, 155–174, 176–195, 197–216, 217–236, 238–257, 259–278, 279–298, 300–319, 321–340, and 341–360. Residues 53-360 form a 15 X 20 AA approximate tandem repeats of P-P-G-K-P-Q-G-P-P-P-Q-G-[GD]-[NKS]-[KSQ]-[PRS]-[QRS] [GPS]-[PSAR]-[PSR] region; that stretch reads PPGKPQGPPP…QGGSKSRSAR (308 aa). N168 carries N-linked (GlcNAc...) asparagine glycosylation. Over residues 177 to 227 the composition is skewed to pro residues; that stretch reads PGKPQGPPPQGGNQPQGPPPPPGKPQGPPPQGGNKPQGPPPPGKPQGPPPQ. The N-linked (GlcNAc...) asparagine glycan is linked to N230. An O-linked (Hex) serine glycan is attached at S232. Residues 239–289 are compositionally biased toward pro residues; it reads PGKPQGPPPQGGNQPQGPPPPPGKPQGPPPQGGNKPQGPPPPGKPQGPPPQ. N-linked (GlcNAc...) asparagine glycosylation is present at N272. The segment covering 290–300 has biased composition (low complexity); it reads GGSKSRSSRSP. Composition is skewed to pro residues over residues 301 to 351 and 378 to 416; these read PGKP…PPPQ and QGPPPPAGGNPQQPQAPPAGQPQGPPRPPQGGRPSRPPQ.

Post-translationally, N- and O-glycosylated. In head and neck cancer patients, O-glycosylated with glucosylgalactosyl carbohydrate moiety. This modification would require prior hydroxylation on the lysine residue. Proteolytically cleaved at the tripeptide Xaa-Pro-Gln, where Xaa in the P(3) position is mostly lysine. The endoprotease may be of microbial origin. In terms of processing, pyroglutamate formation occurs on terminal Gln residues of cleaved peptides. Pyroglutamate formation found on at least Gln-398 and Gln-400.

The protein localises to the secreted. The polypeptide is Basic salivary proline-rich protein 2 (PRB2) (Homo sapiens (Human)).